The following is a 147-amino-acid chain: uncharacterized protein (147 aa).

The helical transmembrane segment at 71 to 91 (IDILAFVAGTVGVGSLVLLQF) threads the bilayer.

It is found in the virion. It localises to the host membrane. This is an uncharacterized protein from Acanthamoeba polyphaga mimivirus (APMV).